Consider the following 370-residue polypeptide: Protein-glutamate methylesterase/protein-glutamine glutaminase of group 1 operon (370 aa).

A Response regulatory domain is found at 4–121; sequence KVLVVDDSGF…SRNPDKVKQL (118 aa). A 4-aspartylphosphate modification is found at Asp55. The span at 150–180 shows a compositional bias: low complexity; sequence PASTFTSQAQTRPAAPARAAAPTPAASQSPA. The tract at residues 150-183 is disordered; that stretch reads PASTFTSQAQTRPAAPARAAAPTPAASQSPAPKR. Residues 179–370 form the CheB-type methylesterase domain; that stretch reads PAPKRKPYKL…IGKHLVEACV (192 aa). Catalysis depends on residues Ser194, His221, and Asp314.

Belongs to the CheB family. In terms of processing, phosphorylated by CheA. Phosphorylation of the N-terminal regulatory domain activates the methylesterase activity.

It localises to the cytoplasm. The catalysed reaction is [protein]-L-glutamate 5-O-methyl ester + H2O = L-glutamyl-[protein] + methanol + H(+). It catalyses the reaction L-glutaminyl-[protein] + H2O = L-glutamyl-[protein] + NH4(+). In terms of biological role, involved in chemotaxis. Part of a chemotaxis signal transduction system that modulates chemotaxis in response to various stimuli. Catalyzes the demethylation of specific methylglutamate residues introduced into the chemoreceptors (methyl-accepting chemotaxis proteins or MCP) by CheR. Also mediates the irreversible deamidation of specific glutamine residues to glutamic acid. This chain is Protein-glutamate methylesterase/protein-glutamine glutaminase of group 1 operon, found in Pseudomonas putida (strain ATCC 47054 / DSM 6125 / CFBP 8728 / NCIMB 11950 / KT2440).